The chain runs to 249 residues: Ribonuclease 3 (249 aa).

The region spanning phenylalanine 20–glycine 149 is the RNase III domain. Glutamate 62 is a Mg(2+) binding site. Aspartate 66 is an active-site residue. Aspartate 135 and glutamate 138 together coordinate Mg(2+). Glutamate 138 is a catalytic residue. Positions aspartate 175–lysine 244 constitute a DRBM domain. Residues arginine 225–glutamine 249 are disordered.

It belongs to the ribonuclease III family. As to quaternary structure, homodimer. Mg(2+) serves as cofactor.

The protein localises to the cytoplasm. It catalyses the reaction Endonucleolytic cleavage to 5'-phosphomonoester.. In terms of biological role, digests double-stranded RNA. Involved in the processing of primary rRNA transcript to yield the immediate precursors to the large and small rRNAs (23S and 16S). Processes some mRNAs, and tRNAs when they are encoded in the rRNA operon. Processes pre-crRNA and tracrRNA of type II CRISPR loci if present in the organism. This Bacillus licheniformis (strain ATCC 14580 / DSM 13 / JCM 2505 / CCUG 7422 / NBRC 12200 / NCIMB 9375 / NCTC 10341 / NRRL NRS-1264 / Gibson 46) protein is Ribonuclease 3.